The chain runs to 47 residues: Delta-actitoxin-Axm1e (47 aa).

Disulfide bonds link cysteine 4-cysteine 44, cysteine 6-cysteine 34, and cysteine 27-cysteine 45.

This sequence belongs to the sea anemone sodium channel inhibitory toxin family. Type I subfamily.

The protein resides in the secreted. It localises to the nematocyst. Binds specifically to voltage-gated sodium channels (Nav), thereby delaying their inactivation. This toxin is active on a variety of voltage-gated sodium channels (Nav1.1/SCN1A, Nav1.2/SCN2A, Nav1.3/SCN3A, Nav1.4/SCN4A, Nav1.5/SCN5A and Nav1.6/SCN8A). The sequence is that of Delta-actitoxin-Axm1e from Anthopleura xanthogrammica (Giant green sea anemone).